The primary structure comprises 683 residues: FAD-binding monooxygenase ausC (683 aa).

Residue N5 is glycosylated (N-linked (GlcNAc...) asparagine). Residues 111–131 (ILIIGAGFGGLLFAVRLIQTG) form a helical membrane-spanning segment. FAD contacts are provided by residues 150–153 (TWYW), 162–163 (DT), and Y168. 160–162 (MCD) is a binding site for NADP(+). A glycan (N-linked (GlcNAc...) asparagine) is linked at N286. NADP(+) is bound by residues 310–316 (TGASAVQ) and 333–334 (RT). N525 and N572 each carry an N-linked (GlcNAc...) asparagine glycan.

The protein belongs to the FAD-binding monooxygenase family. FAD is required as a cofactor.

It localises to the membrane. The enzyme catalyses preaustinoid A + AH2 + O2 = preaustinoid A1 + A + H2O. It functions in the pathway secondary metabolite biosynthesis; terpenoid biosynthesis. In terms of biological role, FAD-binding monooxygenase; part of the gene cluster A that mediates the biosynthesis of austinol and dehydroaustinol, two fungal meroterpenoids. The first step of the pathway is the synthesis of 3,5-dimethylorsellinic acid by the polyketide synthase ausA. 3,5-dimethylorsellinic acid is then prenylated by the polyprenyl transferase ausN. Further epoxidation by the FAD-dependent monooxygenase ausM and cyclization by the probable terpene cyclase ausL lead to the formation of protoaustinoid A. Protoaustinoid A is then oxidized to spiro-lactone preaustinoid A3 by the combined action of the FAD-binding monooxygenases ausB and ausC, and the dioxygenase ausE. Acid-catalyzed keto-rearrangement and ring contraction of the tetraketide portion of preaustinoid A3 by ausJ lead to the formation of preaustinoid A4. The aldo-keto reductase ausK, with the help of ausH, is involved in the next step by transforming preaustinoid A4 into isoaustinone which is in turn hydroxylated by the P450 monooxygenase ausI to form austinolide. Finally, the cytochrome P450 monooxygenase ausG modifies austinolide to austinol. Austinol can be further modified to dehydroaustinol which forms a diffusible complex with diorcinol that initiates conidiation. Due to genetic rearrangements of the clusters and the subsequent loss of some enzymes, the end products of the Emericella nidulans austinoid biosynthesis clusters are austinol and dehydroaustinol, even if additional enzymes, such as the O-acetyltransferase ausQ and the cytochrome P450 monooxygenase ausR are still functional. In Emericella nidulans (strain FGSC A4 / ATCC 38163 / CBS 112.46 / NRRL 194 / M139) (Aspergillus nidulans), this protein is FAD-binding monooxygenase ausC.